Reading from the N-terminus, the 353-residue chain is DNA polymerase IV (353 aa).

The 185-residue stretch at 14–198 (IIHIDMDAFF…MDISKFHGVG (185 aa)) folds into the UmuC domain. 2 residues coordinate Mg(2+): Asp18 and Asp116. Residue Glu117 is part of the active site.

It belongs to the DNA polymerase type-Y family. Monomer. Mg(2+) is required as a cofactor.

It is found in the cytoplasm. It catalyses the reaction DNA(n) + a 2'-deoxyribonucleoside 5'-triphosphate = DNA(n+1) + diphosphate. Its function is as follows. Poorly processive, error-prone DNA polymerase involved in untargeted mutagenesis. Copies undamaged DNA at stalled replication forks, which arise in vivo from mismatched or misaligned primer ends. These misaligned primers can be extended by PolIV. Exhibits no 3'-5' exonuclease (proofreading) activity. May be involved in translesional synthesis, in conjunction with the beta clamp from PolIII. This chain is DNA polymerase IV, found in Streptococcus pneumoniae serotype 4 (strain ATCC BAA-334 / TIGR4).